Here is a 693-residue protein sequence, read N- to C-terminus: Glycine--tRNA ligase beta subunit (693 aa).

This sequence belongs to the class-II aminoacyl-tRNA synthetase family. In terms of assembly, tetramer of two alpha and two beta subunits.

It is found in the cytoplasm. The enzyme catalyses tRNA(Gly) + glycine + ATP = glycyl-tRNA(Gly) + AMP + diphosphate. The polypeptide is Glycine--tRNA ligase beta subunit (Vibrio vulnificus (strain YJ016)).